The chain runs to 411 residues: Solute carrier RCH1 (411 aa).

At methionine 1–lysine 17 the chain is on the cytoplasmic side. The chain crosses the membrane as a helical span at residues valine 18 to alanine 38. The Extracellular portion of the chain corresponds to histidine 39–arginine 52. The chain crosses the membrane as a helical span at residues alanine 53–methionine 73. Residues serine 74–phenylalanine 89 lie on the Cytoplasmic side of the membrane. The helical transmembrane segment at threonine 90–isoleucine 110 threads the bilayer. The Extracellular segment spans residues lysine 111 to aspartate 120. The chain crosses the membrane as a helical span at residues tryptophan 121–valine 141. Residues methionine 142–aspartate 150 are Cytoplasmic-facing. A helical transmembrane segment spans residues isoleucine 151–leucine 171. Residues leucine 172 to lysine 204 are Extracellular-facing. The helical transmembrane segment at glutamine 205–proline 225 threads the bilayer. The Cytoplasmic portion of the chain corresponds to lysine 226–serine 242. A helical transmembrane segment spans residues phenylalanine 243–threonine 263. At serine 264 to serine 269 the chain is on the extracellular side. A helical transmembrane segment spans residues isoleucine 270–phenylalanine 290. At tyrosine 291 to aspartate 329 the chain is on the cytoplasmic side. A helical transmembrane segment spans residues threonine 330–serine 350. Topologically, residues serine 351–glycine 361 are extracellular. Residues isoleucine 362–valine 382 traverse the membrane as a helical segment. The Cytoplasmic portion of the chain corresponds to serine 383 to lysine 411.

This sequence belongs to the bile acid:sodium symporter (BASS) (TC 2.A.28) family.

The protein localises to the cell membrane. Its subcellular location is the bud neck. In terms of biological role, solute carrier protein that negatively regulates the cytosolic homeostasis in response to high levels of extracellular calcium. The sequence is that of Solute carrier RCH1 from Candida albicans (strain SC5314 / ATCC MYA-2876) (Yeast).